A 161-amino-acid chain; its full sequence is Probable chemoreceptor glutamine deamidase CheD (161 aa).

It belongs to the CheD family.

The enzyme catalyses L-glutaminyl-[protein] + H2O = L-glutamyl-[protein] + NH4(+). Its function is as follows. Probably deamidates glutamine residues to glutamate on methyl-accepting chemotaxis receptors (MCPs), playing an important role in chemotaxis. The polypeptide is Probable chemoreceptor glutamine deamidase CheD (Thermococcus kodakarensis (strain ATCC BAA-918 / JCM 12380 / KOD1) (Pyrococcus kodakaraensis (strain KOD1))).